The chain runs to 59 residues: Potassium channel toxin alpha-KTx 15.4 (59 aa).

Residues 1–22 (MKFSSIILLTLLICSMSIFGNC) form the signal peptide. Position 23 is a pyrrolidone carboxylic acid (Gln-23). Disulfide bonds link Cys-30-Cys-50, Cys-35-Cys-55, and Cys-39-Cys-57.

As to expression, expressed by the venom gland.

The protein resides in the secreted. Its function is as follows. Blocker of A-type voltage-gated potassium channels of cerebellar granular cells. May also inhibit Kv4/KCND when coexpressed with DPP6 or DPP10. The occlusion of the outer entry of the K(+) conducting pore is partially reversible and affects both open and closed channels. It shares the same target in rat brain than BmTX3 (AC Q8I0L5) and AmmTX3 (AC P60208). The protein is Potassium channel toxin alpha-KTx 15.4 of Androctonus australis (Sahara scorpion).